A 157-amino-acid chain; its full sequence is Large ribosomal subunit protein bL34c (157 aa).

A chloroplast-targeting transit peptide spans 1–97 (MASLSTSVVA…GQRRRGLVVR (97 aa)).

Belongs to the bacterial ribosomal protein bL34 family. Part of the 50S ribosomal subunit.

It localises to the plastid. The protein localises to the chloroplast. Its function is as follows. This protein binds directly to 23S ribosomal RNA. This chain is Large ribosomal subunit protein bL34c (RPL34), found in Arabidopsis thaliana (Mouse-ear cress).